The primary structure comprises 221 residues: Transcription antitermination protein NusB (221 aa).

Belongs to the NusB family.

Functionally, involved in transcription antitermination. Required for transcription of ribosomal RNA (rRNA) genes. Binds specifically to the boxA antiterminator sequence of the ribosomal RNA (rrn) operons. The chain is Transcription antitermination protein NusB from Synechocystis sp. (strain ATCC 27184 / PCC 6803 / Kazusa).